The primary structure comprises 150 residues: UPF0756 membrane protein APL_0366 (150 aa).

4 helical membrane passes run 12–34, 52–72, 82–102, and 123–143; these read LVVLIFLGVVGNNNSITIAATVL, HGLSIGIIILTIGVLSPIVSG, FLNWKMLLAVVAGIAVAWLGG, and IIGVALLGGVPVGPLIAAGIL.

This sequence belongs to the UPF0756 family.

The protein resides in the cell membrane. This Actinobacillus pleuropneumoniae serotype 5b (strain L20) protein is UPF0756 membrane protein APL_0366.